The primary structure comprises 425 residues: L-cysteine:1D-myo-inositol 2-amino-2-deoxy-alpha-D-glucopyranoside ligase (425 aa).

Cys43 is a Zn(2+) binding site. Residues 43-46 (CGIT), Thr58, and 81-83 (NVT) contribute to the L-cysteinyl-5'-AMP site. The 'HIGH' region motif lies at 45–55 (ITPYDATHIGH). The short motif at 195–200 (ERGGDP) is the 'ERGGDP' region element. Trp236 serves as a coordination point for L-cysteinyl-5'-AMP. Position 240 (Cys240) interacts with Zn(2+). 258–260 (GSD) is an L-cysteinyl-5'-AMP binding site. His265 lines the Zn(2+) pocket. Position 295 (Val295) interacts with L-cysteinyl-5'-AMP. The 'KMSKS' region motif lies at 301 to 305 (KMSKS).

This sequence belongs to the class-I aminoacyl-tRNA synthetase family. MshC subfamily. In terms of assembly, monomer. Zn(2+) is required as a cofactor.

It catalyses the reaction 1D-myo-inositol 2-amino-2-deoxy-alpha-D-glucopyranoside + L-cysteine + ATP = 1D-myo-inositol 2-(L-cysteinylamino)-2-deoxy-alpha-D-glucopyranoside + AMP + diphosphate + H(+). Its function is as follows. Catalyzes the ATP-dependent condensation of GlcN-Ins and L-cysteine to form L-Cys-GlcN-Ins. The sequence is that of L-cysteine:1D-myo-inositol 2-amino-2-deoxy-alpha-D-glucopyranoside ligase from Sanguibacter keddieii (strain ATCC 51767 / DSM 10542 / NCFB 3025 / ST-74).